A 454-amino-acid chain; its full sequence is Phosphoglucosamine mutase (454 aa).

Ser104 functions as the Phosphoserine intermediate in the catalytic mechanism. Ser104, Asp247, Asp249, and Asp251 together coordinate Mg(2+). The residue at position 104 (Ser104) is a Phosphoserine.

This sequence belongs to the phosphohexose mutase family. Mg(2+) is required as a cofactor. Activated by phosphorylation.

The catalysed reaction is alpha-D-glucosamine 1-phosphate = D-glucosamine 6-phosphate. Functionally, catalyzes the conversion of glucosamine-6-phosphate to glucosamine-1-phosphate. This is Phosphoglucosamine mutase from Bifidobacterium animalis subsp. lactis (strain AD011).